A 339-amino-acid polypeptide reads, in one-letter code: 4-hydroxythreonine-4-phosphate dehydrogenase (339 aa).

Substrate is bound by residues H141 and T142. 3 residues coordinate a divalent metal cation: H171, H215, and H270. K278, N287, and R296 together coordinate substrate.

It belongs to the PdxA family. As to quaternary structure, homodimer. Zn(2+) is required as a cofactor. Mg(2+) serves as cofactor. Requires Co(2+) as cofactor.

It is found in the cytoplasm. The catalysed reaction is 4-(phosphooxy)-L-threonine + NAD(+) = 3-amino-2-oxopropyl phosphate + CO2 + NADH. It functions in the pathway cofactor biosynthesis; pyridoxine 5'-phosphate biosynthesis; pyridoxine 5'-phosphate from D-erythrose 4-phosphate: step 4/5. Functionally, catalyzes the NAD(P)-dependent oxidation of 4-(phosphooxy)-L-threonine (HTP) into 2-amino-3-oxo-4-(phosphooxy)butyric acid which spontaneously decarboxylates to form 3-amino-2-oxopropyl phosphate (AHAP). The polypeptide is 4-hydroxythreonine-4-phosphate dehydrogenase (Geobacter metallireducens (strain ATCC 53774 / DSM 7210 / GS-15)).